The primary structure comprises 485 residues: Ribulose bisphosphate carboxylase large chain (485 aa).

Positions 124 and 174 each coordinate substrate. The active-site Proton acceptor is the K176. K178 lines the substrate pocket. Positions 202, 204, and 205 each coordinate Mg(2+). Residue K202 is modified to N6-carboxylysine. The active-site Proton acceptor is H294. The substrate site is built by R295, H327, and S379.

The protein belongs to the RuBisCO large chain family. Type I subfamily. As to quaternary structure, heterohexadecamer of 8 large chains and 8 small chains. Mg(2+) is required as a cofactor.

It carries out the reaction 2 (2R)-3-phosphoglycerate + 2 H(+) = D-ribulose 1,5-bisphosphate + CO2 + H2O. It catalyses the reaction D-ribulose 1,5-bisphosphate + O2 = 2-phosphoglycolate + (2R)-3-phosphoglycerate + 2 H(+). RuBisCO catalyzes two reactions: the carboxylation of D-ribulose 1,5-bisphosphate, the primary event in carbon dioxide fixation, as well as the oxidative fragmentation of the pentose substrate. Both reactions occur simultaneously and in competition at the same active site. The sequence is that of Ribulose bisphosphate carboxylase large chain from Rhodopseudomonas palustris (strain ATCC BAA-98 / CGA009).